The sequence spans 445 residues: RNA-binding protein asd-2 (445 aa).

The tract at residues 22 to 63 (TVIPPPPNDSGHEFIGPSSGPPQVTITPSGVQSGSANGVSTS) is disordered. The span at 42 to 63 (PPQVTITPSGVQSGSANGVSTS) shows a compositional bias: polar residues. Residues 71-128 (EYLSQLLKDKKQLAAFPNVFHHLERLADEEINKVRVVLFQCEFSKESAPLPDAEGDST) are qua1 domain. One can recognise a KH domain in the interval 145–171 (NFVGRILGPRGMTAKQLEQETGCKIMV). Positions 230–253 (APEGEDDLKRKQLMELAIINGTYR) are qua2 domain; involved in RNA binding.

As to quaternary structure, interacts with sup-12; in the presence of RNA, but with weak affinity in the absence of RNA. Isoform b: Expressed in the hypodermis and pharyngeal muscles. Isoform c: Expressed in body wall muscles and phayngeal muscles.

It is found in the nucleus. In terms of biological role, RNA-binding protein that binds to the 5'-NACUAAY-N(1,20)-UAAY-3' consensus sequence in pre-mRNA introns to promote alternative splicing. Required for mutually exclusive alternative splicing where it modulates the switch between mutually exclusive exons during pre-mRNA maturation. Involved in muscle-specific gene expression regulating the alternative splicing of genes such as let-2 and unc-60 to ensure that their respective isoforms are expressed in muscle. Promotes the removal of intron 10 from let-2 pre-mRNA to allow for the exclusive expression of the muscle-specific let-2 isoform (as opposed to the non-muscle-specific isoform expressed in embryos) in body wall muscles during late larval and adult stages of development. Binds cooperatively with RNA-binding protein sup-12 to intron 1A of the unc-60 pre-mRNA to promote alternative splicing and expression of the muscle specific isoform of unc-60. The protein is RNA-binding protein asd-2 of Caenorhabditis elegans.